A 274-amino-acid chain; its full sequence is TATA box-binding protein-associated factor RNA polymerase I subunit D (274 aa).

A compositionally biased stretch (polar residues) spans 1-19 (MDSLNYTTACDSAVETENQ). Disordered stretches follow at residues 1–45 (MDSL…RQRN) and 84–111 (NKKR…RTTR). The residue at position 20 (serine 20) is a Phosphoserine. The span at 84-110 (NKKRKRKKKKYKPTGRSVGRPKGRRTT) shows a compositional bias: basic residues. Phosphoserine occurs at positions 132 and 229.

In terms of assembly, component of the transcription factor SL1/TIF-IB complex, composed of TBP and at least TAF1A, TAF1B, TAF1C and TAF1D. Interacts with UBTF.

It is found in the nucleus. Functionally, component of the transcription factor SL1/TIF-IB complex, which is involved in the assembly of the PIC (preinitiation complex) during RNA polymerase I-dependent transcription. The rate of PIC formation probably is primarily dependent on the rate of association of SL1/TIF-IB with the rDNA promoter. SL1/TIF-IB is involved in stabilization of nucleolar transcription factor 1/UBTF on rDNA. Formation of SL1/TIF-IB excludes the association of TBP with TFIID subunits. In Bos taurus (Bovine), this protein is TATA box-binding protein-associated factor RNA polymerase I subunit D (TAF1D).